The following is a 485-amino-acid chain: Adenylate kinase 8 (485 aa).

Adenylate kinase stretches follow at residues 58-258 and 269-471; these read PRVF…TFVL and PRIL…SYIV. Residue 67–72 participates in ATP binding; that stretch reads ASGKHT. The interval 87 to 113 is NMP 1; the sequence is TPENVLSSDVSLLVKEAQSYRDKGQEV. Residues 140–143 and Q147 contribute to the AMP site; that span reads GFPK. An LID 1 region spans residues 177-206; it reads GKRIDITDGEVYHTTFDWPSDPAVQRNLVE. R218 provides a ligand contact to AMP. 278–283 lines the ATP pocket; the sequence is GSGRSL. The tract at residues 298-327 is NMP 2; it reads CCGQVLKEAVADQTKLGELIQPYIENDQQV. AMP-binding positions include 325-327, 354-357, and Q361; these read QQV and GFPQ. Residues 391 to 424 are LID 2; sequence LCMTDPVSGERYHSIYKPAPRSEVQERLQQNPKY. Position 432 (R432) interacts with AMP.

This sequence belongs to the adenylate kinase family.

Its subcellular location is the cytoplasm. The protein resides in the cytosol. The catalysed reaction is AMP + ATP = 2 ADP. It carries out the reaction a 2'-deoxyribonucleoside 5'-diphosphate + ATP = a 2'-deoxyribonucleoside 5'-triphosphate + ADP. It catalyses the reaction a ribonucleoside 5'-diphosphate + ATP = a ribonucleoside 5'-triphosphate + ADP. In terms of biological role, nucleoside monophosphate (NMP) kinase that catalyzes the reversible transfer of the terminal phosphate group between nucleoside triphosphates and monophosphates. Has highest activity toward AMP, and weaker activity toward dAMP, CMP and dCMP. Also displays broad nucleoside diphosphate kinase activity. The protein is Adenylate kinase 8 (ak8) of Xenopus laevis (African clawed frog).